Reading from the N-terminus, the 709-residue chain is ATP-binding cassette sub-family F member 3 (709 aa).

Alanine 2 bears the N-acetylalanine mark. A Phosphoserine modification is found at serine 83. Residues 129-143 (RLKAKQEKRSEKETL) are compositionally biased toward basic and acidic residues. The tract at residues 129-171 (RLKAKQEKRSEKETLKTSNPLVLEEASASQAGSRKESRLESSG) is disordered. Serine 155, serine 157, and serine 161 each carry phosphoserine. The segment covering 161–171 (SRKESRLESSG) has biased composition (basic and acidic residues). ABC transporter domains follow at residues 178 to 424 (VRIE…LNQQ) and 492 to 707 (LQLD…RREG). An ATP-binding site is contributed by 210–217 (GRNGLGKT). At serine 283 the chain carries Phosphoserine. 525-532 (GENGAGKS) contributes to the ATP binding site.

Belongs to the ABC transporter superfamily. ABCF family. EF3 subfamily.

Functionally, displays an antiviral effect against flaviviruses such as west Nile virus (WNV) in the presence of OAS1B. The protein is ATP-binding cassette sub-family F member 3 (Abcf3) of Mus musculus (Mouse).